A 290-amino-acid chain; its full sequence is Bifunctional protein FolD (290 aa).

Residues 174-176 (GHS), isoleucine 199, and isoleucine 240 each bind NADP(+).

This sequence belongs to the tetrahydrofolate dehydrogenase/cyclohydrolase family. In terms of assembly, homodimer.

The enzyme catalyses (6R)-5,10-methylene-5,6,7,8-tetrahydrofolate + NADP(+) = (6R)-5,10-methenyltetrahydrofolate + NADPH. It carries out the reaction (6R)-5,10-methenyltetrahydrofolate + H2O = (6R)-10-formyltetrahydrofolate + H(+). Its pathway is one-carbon metabolism; tetrahydrofolate interconversion. In terms of biological role, catalyzes the oxidation of 5,10-methylenetetrahydrofolate to 5,10-methenyltetrahydrofolate and then the hydrolysis of 5,10-methenyltetrahydrofolate to 10-formyltetrahydrofolate. The polypeptide is Bifunctional protein FolD (Methanosarcina acetivorans (strain ATCC 35395 / DSM 2834 / JCM 12185 / C2A)).